Reading from the N-terminus, the 382-residue chain is Zinc metalloproteinase nas-7 (382 aa).

The signal sequence occupies residues 1-18 (MLLPWIITIVTVIPATLG). The propeptide occupies 19–79 (HRNRVQDDEM…DIRLPRRHKR (61 aa)). The 194-residue stretch at 80–273 (NGVSRAAKLW…SKINRMYNCP (194 aa)) folds into the Peptidase M12A domain. 5 disulfides stabilise this stretch: C122/C272, C144/C163, C348/C382, C355/C375, and C362/C379. H171 lines the Zn(2+) pocket. E172 is an active-site residue. Residues H175 and H181 each coordinate Zn(2+). The ShKT domain occupies 348–382 (CEDRITVCWWTADRCRSPAIYQVMSSLCPKTCKFC).

It depends on Zn(2+) as a cofactor. In terms of tissue distribution, expressed in the head of adult hermaphrodites but not within pharynx cells. Expressed in pharyngeal muscles, mc cells, intestine, hypodermal seam cells, arcade cells, spermatheca, vulva and rectal epithelial cells.

It localises to the secreted. Functionally, metalloprotease. The polypeptide is Zinc metalloproteinase nas-7 (nas-7) (Caenorhabditis elegans).